We begin with the raw amino-acid sequence, 106 residues long: uncharacterized protein (106 aa).

The 93-residue stretch at 1–93 folds into the HTH hxlR-type domain; sequence MSIFYVLGKK…WEAKWKEAKI (93 aa).

This is an uncharacterized protein from Methanocaldococcus jannaschii (strain ATCC 43067 / DSM 2661 / JAL-1 / JCM 10045 / NBRC 100440) (Methanococcus jannaschii).